The following is a 294-amino-acid chain: Large ribosomal subunit protein uL4m (294 aa).

Residues 119–139 are disordered; that stretch reads EVSGGGRKPWQQKGSGRARHG. An Omega-N-methylarginine modification is found at Arg147.

It belongs to the universal ribosomal protein uL4 family. In terms of assembly, component of the mitochondrial ribosome large subunit (39S) which comprises a 16S rRNA and about 50 distinct proteins. Interacts with MIEF1 upstream open reading frame protein.

It localises to the mitochondrion. The chain is Large ribosomal subunit protein uL4m (Mrpl4) from Mus musculus (Mouse).